Reading from the N-terminus, the 596-residue chain is MKKMNLAVCIATLMGTAGLMGTAVAADNLAEFHVQNQECDSCHTPDGELSNDSLTYENTQCVSCHGTLAEVAETTKHEHYNAHASHFPGEVACTSCHSAHEKSMVYCDSCHSFDFNMPYAKKWLRDEPTIAELAKDKSERQAALASAPHDTVDVVVVGSGGAGFSAAISATDSGAKVILIEKEPVIGGNAKLAAGGMNAAWTDQQKAKKITDSPELMFEDTMKGGQNINDPALVKVLSSHSKDSVDWMTAMGADLTDVGMMGGASVNRAHRPTGGAGVGAHVVQVLYDNAVKRNIDLRMNTRGIEVLKDDKGTVKGILVKGMYKGYYWVKADAVILATGGFAKNNERVAKLDPSLKGFISTNQPGAVGDGLDVAENAGGALKDMQYIQAHPTLSVKGGVMVTEAVRGNGAILVNREGKRFVNEITTRDKASAAILAQTGKSAYLIFDDSVRKSLSKIDKYIGLGVAPTADSLVKLGKMEGIDGKALTETVARYNSLVSSGKDTDFERPNLPRALNEGNYYAIEVTPGVHHTMGGVMIDTKAEVMNAKKQVIPGLYGAGEVTGGVHGANRLGGNAISDIITFGRLAGEEAAKYSKKN.

Positions 1 to 25 are cleaved as a signal peptide; it reads MKKMNLAVCIATLMGTAGLMGTAVA. Residues histidine 33, cysteine 39, cysteine 42, histidine 43, cysteine 61, cysteine 64, histidine 65, histidine 83, histidine 86, cysteine 93, cysteine 96, histidine 97, alanine 99, histidine 100, cysteine 107, cysteine 110, and histidine 111 each coordinate heme c. Positions 143-596 are flavoprotein-like; that stretch reads ALASAPHDTV…EEAAKYSKKN (454 aa). FAD contacts are provided by alanine 162, glutamate 181, asparagine 189, alanine 194, glycine 195, glycine 196, glycine 303, and aspartate 369. A fumarate-binding site is contributed by glycine 195. Residue glycine 195 coordinates succinate. Tyrosine 386 is a binding site for heme c. Histidine 390, threonine 402, and glutamate 403 together coordinate succinate. Threonine 402 and glutamate 403 together coordinate fumarate. Catalysis depends on arginine 427, which acts as the Proton donor. Residue histidine 529 coordinates fumarate. Histidine 529 lines the succinate pocket. Residues histidine 530 and glutamate 559 each coordinate FAD. Residues arginine 569 and glycine 572 each coordinate fumarate. Positions 569 and 572 each coordinate succinate. FAD is bound by residues alanine 574 and isoleucine 575.

The protein in the C-terminal section; belongs to the FAD-dependent oxidoreductase 2 family. FRD/SDH subfamily. Monomer. FAD serves as cofactor. Requires heme c as cofactor.

Its subcellular location is the periplasm. It carries out the reaction 2 Fe(III)-[cytochrome c] + succinate = fumarate + 2 Fe(II)-[cytochrome c] + 2 H(+). Its activity is regulated as follows. Mesaconic acid is a competitive inhibitor of fumarate reduction. Its function is as follows. Flavocytochrome that catalyzes the reduction of fumarate to succinate. Is essential for fumarate respiration during anaerobic growth, acting as the terminal reductase. Receives electrons from the membrane-bound tetraheme c-type cytochrome CymA. Is essentially unidirectional, catalyzing only fumarate reduction. Cannot reduce nitrite, dimethylsulphoxide, trimethylamine-N-oxide (TMAO) or sulfite. In vitro, can use the artificial electron donor methyl viologen. The polypeptide is Fumarate reductase (cytochrome) (Shewanella frigidimarina (strain NCIMB 400)).